Consider the following 59-residue polypeptide: UPF0391 membrane protein lpp2589 (59 aa).

2 helical membrane-spanning segments follow: residues 5–25 (ALIF…GIAV) and 30–50 (IAKI…IMGL).

This sequence belongs to the UPF0391 family.

Its subcellular location is the cell membrane. The sequence is that of UPF0391 membrane protein lpp2589 from Legionella pneumophila (strain Paris).